The primary structure comprises 178 residues: Probable coatomer subunit zeta-B (178 aa).

Belongs to the adaptor complexes small subunit family. As to quaternary structure, oligomeric complex that consists of at least the alpha, beta, beta', gamma, delta, epsilon and zeta subunits.

The protein resides in the cytoplasm. It localises to the golgi apparatus membrane. Its subcellular location is the cytoplasmic vesicle. It is found in the COPI-coated vesicle membrane. Its function is as follows. The coatomer is a cytosolic protein complex that binds to dilysine motifs and reversibly associates with Golgi non-clathrin-coated vesicles, which further mediate biosynthetic protein transport from the ER, via the Golgi up to the trans Golgi network. Coatomer complex is required for budding from Golgi membranes, and is essential for the retrograde Golgi-to-ER transport of dilysine-tagged proteins. The zeta subunit may be involved in regulating the coat assembly and, hence, the rate of biosynthetic protein transport due to its association-dissociation properties with the coatomer complex. This is Probable coatomer subunit zeta-B (copZb) from Dictyostelium discoideum (Social amoeba).